We begin with the raw amino-acid sequence, 199 residues long: Large ribosomal subunit protein bL25 (199 aa).

It belongs to the bacterial ribosomal protein bL25 family. CTC subfamily. Part of the 50S ribosomal subunit; part of the 5S rRNA/L5/L18/L25 subcomplex. Contacts the 5S rRNA. Binds to the 5S rRNA independently of L5 and L18.

Its function is as follows. This is one of the proteins that binds to the 5S RNA in the ribosome where it forms part of the central protuberance. In Rickettsia akari (strain Hartford), this protein is Large ribosomal subunit protein bL25.